The chain runs to 498 residues: MNQSIPVAPTPPRRVRLKPWLVAQVNSCQYPGLQWVNGEKKLFCIPWRHATRHGPSQDGDNTIFKAWAKETGKYTEGVDEADPAKWKANLRCALNKSRDFRLIYDGPRDMPPQPYKIYEVCSNGPAPTDSQPPEDYSFGAGEEEEEEEELQRMLPSLSLTEDVKWPPTLQPPTLRPPTLQPPTLQPPVVLGPPAPDPSPLAPPPGNPAGFRELLSEVLEPGPLPASLPPAGEQLLPDLLISPHMLPLTDLEIKFQYRGRPPRALTISNPHGCRLFYSQLEATQEQVELFGPISLEQVRFPSPEDIPSDKQRFYTNQLLDVLDRGLILQLQGQDLYAIRLCQCKVFWSGPCASAHDSCPNPIQREVKTKLFSLEHFLNELILFQKGQTNTPPPFEIFFCFGEEWPDRKPREKKLITVQVVPVAARLLLEMFSGELSWSADSIRLQISNPDLKDRMVEQFKELHHIWQSQQRLQPVAQAPPGAGLGVGQGPWPMHPAGMQ.

At Thr-10 the chain carries Phosphothreonine. The short motif at 12–18 (PRRVRLK) is the Nuclear localization signal element. Positions 14–122 (RVRLKPWLVA…QPYKIYEVCS (109 aa)) form a DNA-binding region, IRF tryptophan pentad repeat. The segment at 121–207 (CSNGPAPTDS…SPLAPPPGNP (87 aa)) is disordered. The Nuclear export signal motif lies at 150–160 (LQRMLPSLSLT). Residue Ser-158 is modified to Phosphoserine; by TBK1. The span at 168–206 (TLQPPTLRPPTLQPPTLQPPVVLGPPAPDPSPLAPPPGN) shows a compositional bias: pro residues. Position 293 is a phosphoserine; by TBK1 (Ser-293). The residue at position 301 (Ser-301) is a Phosphoserine. Residues Lys-411 and Lys-412 each participate in a glycyl lysine isopeptide (Lys-Gly) (interchain with G-Cter in ubiquitin) cross-link. 4 positions are modified to phosphoserine: Ser-431, Ser-435, Ser-437, and Ser-440. Ser-446 is modified (phosphoserine; by IKKB). The segment at 478–498 (PPGAGLGVGQGPWPMHPAGMQ) is disordered.

The protein belongs to the IRF family. As to quaternary structure, homodimer, when phosphorylated. Interacts with TASL (via pLxIS motif); interaction takes place downstream of TLR7, TLR8 or TLR9, leading to its activation. Interacts with MYD88 and TRAF6. Post-translationally, phosphorylation of serine and threonine residues by IKBKB in a C-terminal autoinhibitory region, stimulates dimerization, transport into the nucleus, assembly with the coactivator CBP/EP300 and initiation of transcription. In terms of processing, 'Lys-63'-linked polyubiquitination by TRAF6 is required for activation.

Its subcellular location is the cytoplasm. The protein localises to the nucleus. With respect to regulation, maintained as a monomer in an autoinhibited state. Phosphorylation and activation follow the following steps: innate adapter protein TASL recruits IRF5, thereby licensing IRF5 for phosphorylation by IKBKB. Phosphorylated IRF5 dissociates from the adapter proteins, dimerizes, and then enters the nucleus to induce IFNs. Its activity is regulated as follows. (Microbial infection) Activated upon coronavirus SARS-CoV-2 infection. Its function is as follows. Transcription factor that plays a critical role in innate immunity by activating expression of type I interferon (IFN) IFNA and INFB and inflammatory cytokines downstream of endolysosomal toll-like receptors TLR7, TLR8 and TLR9. Regulates the transcription of type I IFN genes (IFN-alpha and IFN-beta) and IFN-stimulated genes (ISG) by binding to an interferon-stimulated response element (ISRE) in their promoters. Can efficiently activate both the IFN-beta (IFNB) and the IFN-alpha (IFNA) genes and mediate their induction downstream of the TLR-activated, MyD88-dependent pathway. Key transcription factor regulating the IFN response during SARS-CoV-2 infection. The protein is Interferon regulatory factor 5 of Homo sapiens (Human).